The following is a 236-amino-acid chain: Heme oxygenase (236 aa).

A heme b-binding site is contributed by H17.

This sequence belongs to the heme oxygenase family.

The protein resides in the plastid. The protein localises to the chloroplast. It carries out the reaction heme b + 3 reduced [NADPH--hemoprotein reductase] + 3 O2 = biliverdin IXalpha + CO + Fe(2+) + 3 oxidized [NADPH--hemoprotein reductase] + 3 H2O + H(+). Its function is as follows. Catalyzes the opening of the heme ring with the release of iron. Key enzyme in the synthesis of the chromophoric part of the photosynthetic antennae. This is Heme oxygenase (pbsA) from Porphyra purpurea (Red seaweed).